Here is a 686-residue protein sequence, read N- to C-terminus: Secretin GspD 2 (686 aa).

Residues 1 to 40 (MFWRDITLSVWRKKTTGLKTKKRLLPLVLAAALCSSPVWA) form the signal peptide. The N0, contacts GspC2 stretch occupies residues 41–140 (EEATFTANFK…VGEGSDNYAG (100 aa)). The N1 stretch occupies residues 142–206 (EMVTKVVPVR…EVIQRVDHAG (65 aa)). The N2 stretch occupies residues 207–279 (NRTEEVIPLD…LIRRLDSEME (73 aa)). The interval 282–357 (GNSQVFYLKY…SLQSVIEQLD (76 aa)) is N3. The segment at 360–627 (RAQVHVEALI…VFIRPTILRD (268 aa)) is secretin. The tract at residues 414-433 (PQKGSTVISENGATTINPDT) is cap gate. The s domain, contacts AspS2 stretch occupies residues 629 to 686 (MAADGVSQRKYNYMRAEQIYRDEQGLSLMPHTAQPVLPAQNQALPPEVRAFLNAGRTR).

The protein belongs to the bacterial secretin family. GSP D subfamily. In terms of assembly, forms a cylindrical channel with 15 subunits, each of which interacts with the surrounding pilotin AspS2 proteins (also called GspS-beta). Interacts with inner cell membrane protein GspC2 in the periplasm. Forms multimers in the outer membrane. The isolated N0 domain forms dimers that self-assemble into rings.

The protein localises to the cell outer membrane. Part of a type II secretion system (T2SS, formerly general secretion pathway, GSP) for the export of folded proteins across the outer membrane. This subunit forms the outer membrane channel. The protein is Secretin GspD 2 (gspD2) of Escherichia coli O78:H11 (strain H10407 / ETEC).